The primary structure comprises 545 residues: Bifunctional purine biosynthesis protein PurH (545 aa).

The MGS-like domain maps to 1–150 (MTNTNRPIRR…KNHATVAIVT (150 aa)).

Belongs to the PurH family.

It catalyses the reaction (6R)-10-formyltetrahydrofolate + 5-amino-1-(5-phospho-beta-D-ribosyl)imidazole-4-carboxamide = 5-formamido-1-(5-phospho-D-ribosyl)imidazole-4-carboxamide + (6S)-5,6,7,8-tetrahydrofolate. The enzyme catalyses IMP + H2O = 5-formamido-1-(5-phospho-D-ribosyl)imidazole-4-carboxamide. It functions in the pathway purine metabolism; IMP biosynthesis via de novo pathway; 5-formamido-1-(5-phospho-D-ribosyl)imidazole-4-carboxamide from 5-amino-1-(5-phospho-D-ribosyl)imidazole-4-carboxamide (10-formyl THF route): step 1/1. Its pathway is purine metabolism; IMP biosynthesis via de novo pathway; IMP from 5-formamido-1-(5-phospho-D-ribosyl)imidazole-4-carboxamide: step 1/1. This chain is Bifunctional purine biosynthesis protein PurH, found in Bifidobacterium longum (strain NCC 2705).